The primary structure comprises 254 residues: RING-H2 finger protein ATL28 (254 aa).

The chain crosses the membrane as a helical span at residues 25–45 (VVLTGVLLFVIFAGFFSLFLW). The RING-type; atypical zinc-finger motif lies at 103 to 145 (CAICLSEFSDEDTVRLITVCRHPFHSNCIDLWFELHKTCPVCR).

This sequence belongs to the RING-type zinc finger family. ATL subfamily.

Its subcellular location is the membrane. It catalyses the reaction S-ubiquitinyl-[E2 ubiquitin-conjugating enzyme]-L-cysteine + [acceptor protein]-L-lysine = [E2 ubiquitin-conjugating enzyme]-L-cysteine + N(6)-ubiquitinyl-[acceptor protein]-L-lysine.. The protein operates within protein modification; protein ubiquitination. This Arabidopsis thaliana (Mouse-ear cress) protein is RING-H2 finger protein ATL28 (ATL28).